Reading from the N-terminus, the 174-residue chain is Large ribosomal subunit protein uL10 (174 aa).

This sequence belongs to the universal ribosomal protein uL10 family. In terms of assembly, part of the ribosomal stalk of the 50S ribosomal subunit. The N-terminus interacts with L11 and the large rRNA to form the base of the stalk. The C-terminus forms an elongated spine to which L12 dimers bind in a sequential fashion forming a multimeric L10(L12)X complex.

In terms of biological role, forms part of the ribosomal stalk, playing a central role in the interaction of the ribosome with GTP-bound translation factors. This Geotalea uraniireducens (strain Rf4) (Geobacter uraniireducens) protein is Large ribosomal subunit protein uL10.